Here is a 705-residue protein sequence, read N- to C-terminus: Probable iron-sulfur-binding oxidoreductase FadF (705 aa).

6 helical membrane passes run F4–V24, I71–I91, A109–F129, A146–M166, H173–G193, and V199–V219. 4Fe-4S ferredoxin-type domains lie at Q268 to P298 and G360 to I391. [4Fe-4S] cluster is bound by residues C277, C280, C283, C287, C371, C374, C377, and C381.

[4Fe-4S] cluster is required as a cofactor.

Its subcellular location is the cell membrane. The sequence is that of Probable iron-sulfur-binding oxidoreductase FadF (fadF) from Bacillus subtilis (strain 168).